Consider the following 123-residue polypeptide: Large ribosomal subunit protein bL12 (123 aa).

This sequence belongs to the bacterial ribosomal protein bL12 family. As to quaternary structure, homodimer. Part of the ribosomal stalk of the 50S ribosomal subunit. Forms a multimeric L10(L12)X complex, where L10 forms an elongated spine to which 2 to 4 L12 dimers bind in a sequential fashion. Binds GTP-bound translation factors.

Its function is as follows. Forms part of the ribosomal stalk which helps the ribosome interact with GTP-bound translation factors. Is thus essential for accurate translation. The protein is Large ribosomal subunit protein bL12 of Clostridium acetobutylicum (strain ATCC 824 / DSM 792 / JCM 1419 / IAM 19013 / LMG 5710 / NBRC 13948 / NRRL B-527 / VKM B-1787 / 2291 / W).